A 338-amino-acid chain; its full sequence is Replication factor C small subunit (338 aa).

ATP is bound at residue 53–60; sequence GPPGVGKT.

It belongs to the activator 1 small subunits family. RfcS subfamily. As to quaternary structure, heteromultimer composed of small subunits (RfcS) and large subunits (RfcL).

Functionally, part of the RFC clamp loader complex which loads the PCNA sliding clamp onto DNA. This is Replication factor C small subunit from Methanosarcina mazei (strain ATCC BAA-159 / DSM 3647 / Goe1 / Go1 / JCM 11833 / OCM 88) (Methanosarcina frisia).